Here is a 106-residue protein sequence, read N- to C-terminus: Large ribosomal subunit protein bL21 (106 aa).

This sequence belongs to the bacterial ribosomal protein bL21 family. In terms of assembly, part of the 50S ribosomal subunit. Contacts protein L20.

In terms of biological role, this protein binds to 23S rRNA in the presence of protein L20. The sequence is that of Large ribosomal subunit protein bL21 from Dichelobacter nodosus (strain VCS1703A).